A 259-amino-acid polypeptide reads, in one-letter code: ATP synthase subunit a 1 (259 aa).

5 consecutive transmembrane segments (helical) span residues Thr-30–Phe-50, Leu-90–Leu-110, Asp-135–Leu-155, Leu-209–Trp-229, and Ala-230–Val-250.

It belongs to the ATPase A chain family. As to quaternary structure, F-type ATPases have 2 components, CF(1) - the catalytic core - and CF(0) - the membrane proton channel. CF(1) has five subunits: alpha(3), beta(3), gamma(1), delta(1), epsilon(1). CF(0) has three main subunits: a(1), b(2) and c(9-12). The alpha and beta chains form an alternating ring which encloses part of the gamma chain. CF(1) is attached to CF(0) by a central stalk formed by the gamma and epsilon chains, while a peripheral stalk is formed by the delta and b chains.

The protein localises to the cell inner membrane. In terms of biological role, key component of the proton channel; it plays a direct role in the translocation of protons across the membrane. The protein is ATP synthase subunit a 1 of Methylococcus capsulatus (strain ATCC 33009 / NCIMB 11132 / Bath).